We begin with the raw amino-acid sequence, 727 residues long: Catalase-peroxidase (727 aa).

Residues W95–Y218 constitute a cross-link (tryptophyl-tyrosyl-methioninium (Trp-Tyr) (with M-244)). H96 serves as the catalytic Proton acceptor. Residues Y218–M244 constitute a cross-link (tryptophyl-tyrosyl-methioninium (Tyr-Met) (with W-95)). Heme b is bound at residue H259.

The protein belongs to the peroxidase family. Peroxidase/catalase subfamily. As to quaternary structure, homodimer or homotetramer. Heme b serves as cofactor. Formation of the three residue Trp-Tyr-Met cross-link is important for the catalase, but not the peroxidase activity of the enzyme.

It catalyses the reaction H2O2 + AH2 = A + 2 H2O. The catalysed reaction is 2 H2O2 = O2 + 2 H2O. Functionally, bifunctional enzyme with both catalase and broad-spectrum peroxidase activity. The protein is Catalase-peroxidase of Persephonella marina (strain DSM 14350 / EX-H1).